Consider the following 365-residue polypeptide: Flagellar P-ring protein (365 aa).

The signal sequence occupies residues methionine 1 to alanine 19.

The protein belongs to the FlgI family. The basal body constitutes a major portion of the flagellar organelle and consists of four rings (L,P,S, and M) mounted on a central rod.

Its subcellular location is the periplasm. The protein resides in the bacterial flagellum basal body. Assembles around the rod to form the L-ring and probably protects the motor/basal body from shearing forces during rotation. The sequence is that of Flagellar P-ring protein from Escherichia coli O81 (strain ED1a).